A 325-amino-acid polypeptide reads, in one-letter code: Exogastrula-inducing polypeptide (325 aa).

Positions 1–19 (MKVSLVLLIAVFGLAMVAA) are cleaved as a signal peptide. The propeptide occupies 20–45 (EETLESKLQMALKSLLQENEELNLEG). 2 consecutive EGF-like domains span residues 48–91 (TKGG…SSCY) and 107–154 (TVAR…GGCS). 6 disulfides stabilise this stretch: cysteine 52–cysteine 65, cysteine 59–cysteine 75, cysteine 77–cysteine 90, cysteine 111–cysteine 124, cysteine 118–cysteine 138, and cysteine 140–cysteine 153. Positions 160–177 (ELEYLSYVARDVEMEMLA) are excised as a propeptide. The 47-residue stretch at 180–226 (SVYQCNRDTNSCDGFGKCEKSTFGRTTGQYICNCDDGYRNNAYGGCS) folds into the EGF-like 3 domain. 3 disulfides stabilise this stretch: cysteine 184-cysteine 197, cysteine 191-cysteine 211, and cysteine 213-cysteine 225. A propeptide spanning residues 232–249 (EIEYLSMIARDQELEMQA) is cleaved from the precursor. Positions 252 to 298 (SLPQCNRDTNYCDGFGQCVKSTFGRTTGQYICSCNDGYENNLYGGCS) constitute an EGF-like 4 domain. Cystine bridges form between cysteine 256–cysteine 269, cysteine 263–cysteine 283, and cysteine 285–cysteine 297. The propeptide occupies 313-325 (MEILRSLANLLEE).

It localises to the secreted. It is found in the extracellular space. Its subcellular location is the extracellular matrix. Its function is as follows. The EGIP peptides are factors effective to extrude the archenteron toward outside of embryos. May have a role in the induction of gastrulation. This Heliocidaris crassispina (Sea urchin) protein is Exogastrula-inducing polypeptide.